A 217-amino-acid polypeptide reads, in one-letter code: Thymidylate kinase (217 aa).

Position 7–14 (7–14 (GIEGTGKT)) interacts with ATP.

It belongs to the thymidylate kinase family.

The enzyme catalyses dTMP + ATP = dTDP + ADP. Phosphorylation of dTMP to form dTDP in both de novo and salvage pathways of dTTP synthesis. The chain is Thymidylate kinase from Maridesulfovibrio salexigens (strain ATCC 14822 / DSM 2638 / NCIMB 8403 / VKM B-1763) (Desulfovibrio salexigens).